Consider the following 225-residue polypeptide: Cytidylate kinase (225 aa).

12 to 20 is an ATP binding site; it reads GPSGAGKGT.

Belongs to the cytidylate kinase family. Type 1 subfamily.

The protein localises to the cytoplasm. The catalysed reaction is CMP + ATP = CDP + ADP. The enzyme catalyses dCMP + ATP = dCDP + ADP. The chain is Cytidylate kinase from Pectobacterium carotovorum subsp. carotovorum (strain PC1).